Here is a 129-residue protein sequence, read N- to C-terminus: Phosphoribosyl-AMP cyclohydrolase (129 aa).

Position 76 (aspartate 76) interacts with Mg(2+). Cysteine 77 is a Zn(2+) binding site. Residues aspartate 78 and aspartate 80 each coordinate Mg(2+). Residues cysteine 97 and cysteine 104 each coordinate Zn(2+).

Belongs to the PRA-CH family. Homodimer. Mg(2+) serves as cofactor. Zn(2+) is required as a cofactor.

It localises to the cytoplasm. The enzyme catalyses 1-(5-phospho-beta-D-ribosyl)-5'-AMP + H2O = 1-(5-phospho-beta-D-ribosyl)-5-[(5-phospho-beta-D-ribosylamino)methylideneamino]imidazole-4-carboxamide. It participates in amino-acid biosynthesis; L-histidine biosynthesis; L-histidine from 5-phospho-alpha-D-ribose 1-diphosphate: step 3/9. In terms of biological role, catalyzes the hydrolysis of the adenine ring of phosphoribosyl-AMP. This chain is Phosphoribosyl-AMP cyclohydrolase, found in Leptothrix cholodnii (strain ATCC 51168 / LMG 8142 / SP-6) (Leptothrix discophora (strain SP-6)).